We begin with the raw amino-acid sequence, 310 residues long: ADP-L-glycero-D-manno-heptose-6-epimerase (310 aa).

Residues 10-11 (FI), 31-32 (DN), Lys38, Lys53, 75-79 (EGACS), and Asn92 contribute to the NADP(+) site. Tyr140 serves as the catalytic Proton acceptor. Lys144 provides a ligand contact to NADP(+). Position 169 (Asn169) interacts with substrate. NADP(+)-binding residues include Val170 and Lys178. The active-site Proton acceptor is the Lys178. Residues Ser180, His187, 201 to 204 (FSGS), Arg209, and Tyr272 each bind substrate.

It belongs to the NAD(P)-dependent epimerase/dehydratase family. HldD subfamily. As to quaternary structure, homopentamer. NADP(+) serves as cofactor.

It catalyses the reaction ADP-D-glycero-beta-D-manno-heptose = ADP-L-glycero-beta-D-manno-heptose. Its pathway is nucleotide-sugar biosynthesis; ADP-L-glycero-beta-D-manno-heptose biosynthesis; ADP-L-glycero-beta-D-manno-heptose from D-glycero-beta-D-manno-heptose 7-phosphate: step 4/4. Catalyzes the interconversion between ADP-D-glycero-beta-D-manno-heptose and ADP-L-glycero-beta-D-manno-heptose via an epimerization at carbon 6 of the heptose. The sequence is that of ADP-L-glycero-D-manno-heptose-6-epimerase from Pectobacterium carotovorum subsp. carotovorum (strain PC1).